Consider the following 210-residue polypeptide: MTMSHASPDAARSRIVLASNNPGKLREFAALFSTAGIDIVPQGELGVSEADEPHATFVENALAKARHASRATGLPAVADDSGLCVPALLGAPGVYSARYAQRAGREKSDAANNAYLVEQLREVADRRAYYYCVLALVRHADDPEPLIAEGRWAGEIVDAPRGAHGFGYDPHFFVPALGATAAELDPAAKNAASHRALALKALVARLGEIR.

Ser19–Lys24 contacts substrate. Positions 51 and 80 each coordinate Mg(2+). Asp80 (proton acceptor) is an active-site residue. Substrate-binding positions include Ser81, Phe166–Asp169, Lys189, and His194–Arg195.

It belongs to the HAM1 NTPase family. As to quaternary structure, homodimer. Mg(2+) is required as a cofactor.

It carries out the reaction XTP + H2O = XMP + diphosphate + H(+). The catalysed reaction is dITP + H2O = dIMP + diphosphate + H(+). The enzyme catalyses ITP + H2O = IMP + diphosphate + H(+). In terms of biological role, pyrophosphatase that catalyzes the hydrolysis of nucleoside triphosphates to their monophosphate derivatives, with a high preference for the non-canonical purine nucleotides XTP (xanthosine triphosphate), dITP (deoxyinosine triphosphate) and ITP. Seems to function as a house-cleaning enzyme that removes non-canonical purine nucleotides from the nucleotide pool, thus preventing their incorporation into DNA/RNA and avoiding chromosomal lesions. In Burkholderia mallei (strain ATCC 23344), this protein is dITP/XTP pyrophosphatase.